The primary structure comprises 432 residues: UDP-N-acetylglucosamine 1-carboxyvinyltransferase (432 aa).

22–23 (KN) contributes to the phosphoenolpyruvate binding site. Residue arginine 96 coordinates UDP-N-acetyl-alpha-D-glucosamine. Cysteine 120 (proton donor) is an active-site residue. Cysteine 120 is modified (2-(S-cysteinyl)pyruvic acid O-phosphothioketal). UDP-N-acetyl-alpha-D-glucosamine is bound by residues 125 to 129 (RPVDL), aspartate 310, and isoleucine 332.

The protein belongs to the EPSP synthase family. MurA subfamily.

The protein resides in the cytoplasm. It catalyses the reaction phosphoenolpyruvate + UDP-N-acetyl-alpha-D-glucosamine = UDP-N-acetyl-3-O-(1-carboxyvinyl)-alpha-D-glucosamine + phosphate. It participates in cell wall biogenesis; peptidoglycan biosynthesis. Functionally, cell wall formation. Adds enolpyruvyl to UDP-N-acetylglucosamine. The chain is UDP-N-acetylglucosamine 1-carboxyvinyltransferase from Caulobacter sp. (strain K31).